The following is a 459-amino-acid chain: Polycomb protein mes-6 (459 aa).

WD repeat units lie at residues 146–186, 192–231, 305–346, 370–409, and 415–454; these read SVGW…CLIV, CHAGTILSVDWSTDGDFILSCGFDHQLMEWDLSVKQVKEH, MHSD…GEVE, SGSAWFIKFAVDPRRRWLVCGGAGGSVMFFDLRNNEETNP, and VGSRTVRQASFSTCGRFLVLVTDEGFVCRFDRVSASVDAK.

Belongs to the WD repeat ESC family. In terms of assembly, interacts directly with the N-terminal domain of mes-2. Forms a heterotrimeric complex with mes-2 and mes-3. Does not interact with mes-4. In terms of tissue distribution, in adults, it is predominantly expressed in the germline, and weakly expressed in intestinal cells.

Its subcellular location is the nucleus. Functionally, polycomb group (PcG) protein. PcG proteins act by forming multiprotein complexes, which are required to maintain the transcriptionally repressive state of homeotic genes throughout development. In association with the nfya-1-NF-Y complex, may play a role in repressing the expression of the homeobox protein egl-5 in tissues such as the head. PcG proteins are not required to initiate repression, but to maintain it during later stages of development. The mes-2/mes-3/mes-6 complex may participate in the global inactivation of the X chromosomes in germline cells. The complex may act via methylation of histone H3 'Lys-27', rendering chromatin heritably changed in its expressibility. This complex is required to exclude mes-4 from the inactivated X-chromosomes in germline cells. Required for small-RNA-induced H3K27 trimethylation. The sequence is that of Polycomb protein mes-6 from Caenorhabditis elegans.